A 735-amino-acid chain; its full sequence is MASPLRFDGRVVLVTGAGGGLGRAYALAFAERGALVIVNDLGGDFKGIGKGSSAADKVVAEIRRKGGKAVANYDSVEAGEKLVKTALDTFGRIDVVVNNAGILRDRSFSRISDEDWDIIHRVHLRGSFQVTRAAWDHMKKQNYGRILMTSSASGIYGNFGQANYSAAKLGILGLCNTLAIEGRKNNIHCNTIAPNAGSRMTETVLPEDLVEALKPEYVAPLVLWLCHESCEENGGLFEVGAGWIGKLRWERTLGAIVRKRNQPMTPEAVRDNWEKICDFSNASKPQTIQESTGGIVEVLHKVDSEGISPNRTSHAAPAATSGFVGAVGHKLPSFSSSYTELQSIMYALGVGASVKNPKDLKFVYEGSADFSCLPTFGVIVAQKSMMNGGLAEVPGLSFNFAKALHGEQYLELYKPLPRSGELKCEAVIADILDKGSGVVIVMDVYSYSGKELICYNQFSVFVVGSGGFGGKRTSEKLKAAVAVPNRPPDAVLRDATSLNQAALYRLSGDWNPLHIDPDFASVAGFEKPILHGLCTFGFSARHVLQQFADNDVSRFKAIKVRFAKPVYPGQTLQTEMWKEGNRIHFQTKVHETGDVVISNAYVDLVPASGVSTQTPSEGGELQSALVFGEIGRRLKSVGREVVKKANAVFEWHITKGGTVAAKWTIDLKSGSGEVYQGPAKGSADVTIIISDEDFMEVVFGKLDPQKAFFSGRLKARGNIMLSQKLQMILKDYAKL.

A (3R)-hydroxyacyl-CoA dehydrogenase region spans residues 1–305 (MASPLRFDGR…VEVLHKVDSE (305 aa)). NAD(+) contacts are provided by residues 13–37 (LVTG…ALVI), leucine 21, and aspartate 40. Lysine 46 is modified (N6-acetyllysine; alternate). Lysine 46 bears the N6-succinyllysine; alternate mark. Serine 52 is subject to Phosphoserine. N6-succinyllysine occurs at positions 57 and 68. 75 to 76 (SV) is an NAD(+) binding site. Lysine 84 carries the N6-succinyllysine modification. Position 99 (asparagine 99) interacts with NAD(+). Serine 151 is a binding site for substrate. The active-site Proton acceptor is tyrosine 164. NAD(+)-binding positions include 164-168 (YSAAK) and 196-199 (AGSR). Position 265 is a phosphothreonine (threonine 265). The residue at position 275 (lysine 275) is an N6-succinyllysine. Serine 304 and serine 308 each carry phosphoserine. An enoyl-CoA hydratase 2 region spans residues 321 to 621 (SGFVGAVGHK…TQTPSEGGEL (301 aa)). Lysine 355 is subject to N6-succinyllysine. 405 to 406 (HG) contacts (3R)-3-hydroxydecanoyl-CoA. Lysine 423 bears the N6-succinyllysine mark. (3R)-3-hydroxydecanoyl-CoA is bound by residues lysine 434, 509 to 514 (DWNPLH), glycine 532, and phenylalanine 562. The 117-residue stretch at 483–599 (VPNRPPDAVL…HETGDVVISN (117 aa)) folds into the MaoC-like domain. At lysine 564 the chain carries N6-acetyllysine. N6-succinyllysine is present on residues lysine 578 and lysine 662. The 113-residue stretch at 623-735 (SALVFGEIGR…QMILKDYAKL (113 aa)) folds into the SCP2 domain. Residue lysine 668 is modified to N6-acetyllysine. Glutamine 705 lines the substrate pocket. An N6-acetyllysine modification is found at lysine 706. Glutamine 723 contributes to the substrate binding site. The residue at position 724 (lysine 724) is an N6-succinyllysine. The Microbody targeting signal signature appears at 733–735 (AKL).

It belongs to the short-chain dehydrogenases/reductases (SDR) family. As to quaternary structure, homodimer. As to expression, present in many tissues with highest concentrations in liver and kidney.

The protein localises to the peroxisome. The catalysed reaction is a (3R)-3-hydroxyacyl-CoA + NAD(+) = a 3-oxoacyl-CoA + NADH + H(+). The enzyme catalyses (24R,25R)-3alpha,7alpha,12alpha,24-tetrahydroxy-5beta-cholestan-26-oyl-CoA = (24E)-3alpha,7alpha,12alpha-trihydroxy-5beta-cholest-24-en-26-oyl-CoA + H2O. It carries out the reaction a (3R)-3-hydroxyacyl-CoA = a (2E)-enoyl-CoA + H2O. It catalyses the reaction (2E)-octenoyl-CoA + H2O = (3R)-hydroxyoctanoyl-CoA. The catalysed reaction is (3R)-hydroxyoctanoyl-CoA + NAD(+) = 3-oxooctanoyl-CoA + NADH + H(+). The enzyme catalyses (3R)-hydroxyhexadecanoyl-CoA + NAD(+) = 3-oxohexadecanoyl-CoA + NADH + H(+). It carries out the reaction (2E)-hexadecenedioyl-CoA + H2O = (3R)-hydroxyhexadecanedioyl-CoA. It catalyses the reaction (3R)-hydroxyhexadecanedioyl-CoA + NAD(+) = 3-oxohexadecanedioyl-CoA + NADH + H(+). The catalysed reaction is (3R)-hydroxyhexadecanoyl-CoA = (2E)-hexadecenoyl-CoA + H2O. The enzyme catalyses (3R)-3-hydroxydecanoyl-CoA = (2E)-decenoyl-CoA + H2O. It carries out the reaction (3R)-3-hydroxydecanoyl-CoA + NAD(+) = 3-oxodecanoyl-CoA + NADH + H(+). It catalyses the reaction (24R,25R)-3alpha,7alpha,12alpha,24-tetrahydroxy-5beta-cholestan-26-oyl-CoA + NAD(+) = 3alpha,7alpha,12alpha-trihydroxy-24-oxo-5beta-cholestan-26-oyl-CoA + NADH + H(+). It participates in lipid metabolism; fatty acid beta-oxidation. Functionally, bifunctional enzyme acting on the peroxisomal fatty acid beta-oxidation pathway. Catalyzes two of the four reactions in fatty acid degradation: hydration of 2-enoyl-CoA (trans-2-enoyl-CoA) to produce (3R)-3-hydroxyacyl-CoA, and dehydrogenation of (3R)-3-hydroxyacyl-CoA to produce 3-ketoacyl-CoA (3-oxoacyl-CoA), which is further metabolized by SCPx. Can use straight-chain and branched-chain fatty acids, as well as bile acid intermediates as substrates. The polypeptide is Peroxisomal multifunctional enzyme type 2 (Mus musculus (Mouse)).